The sequence spans 492 residues: Glutamyl-tRNA(Gln) amidotransferase subunit A (492 aa).

Catalysis depends on charge relay system residues lysine 79 and serine 154. Serine 178 functions as the Acyl-ester intermediate in the catalytic mechanism.

Belongs to the amidase family. GatA subfamily. Heterotrimer of A, B and C subunits.

It catalyses the reaction L-glutamyl-tRNA(Gln) + L-glutamine + ATP + H2O = L-glutaminyl-tRNA(Gln) + L-glutamate + ADP + phosphate + H(+). Allows the formation of correctly charged Gln-tRNA(Gln) through the transamidation of misacylated Glu-tRNA(Gln) in organisms which lack glutaminyl-tRNA synthetase. The reaction takes place in the presence of glutamine and ATP through an activated gamma-phospho-Glu-tRNA(Gln). The chain is Glutamyl-tRNA(Gln) amidotransferase subunit A from Acinetobacter baumannii (strain ACICU).